The chain runs to 423 residues: Mannitol-1-phosphate 5-dehydrogenase (423 aa).

Residues cysteine 40, histidine 69, and glutamate 70 each contribute to the Zn(2+) site.

The protein belongs to the zinc-containing alcohol dehydrogenase family. Zn(2+) is required as a cofactor.

It carries out the reaction D-mannitol 1-phosphate + NAD(+) = beta-D-fructose 6-phosphate + NADH + H(+). Seems to be involved in mannitol utilization. Complements an E.coli mtlD deletion mutant. This Aliivibrio fischeri (strain ATCC 700601 / ES114) (Vibrio fischeri) protein is Mannitol-1-phosphate 5-dehydrogenase.